The chain runs to 221 residues: MDIIKFDVYRGPNIGVYISVNDNTILLPMGFAKTKAEKLAKYLGVNYLFTSIANTRLIGALCIMNNKGILLPKTAYQNEFDFLKKELDLEVGVLDSKLTALGNVICANDKGAVVSPWLSKEDCQTISDVLGVETIQKKIAGFNQTGVVMVANNSGAAIHPEADEEDMKTFSNLLGVKIEQSSINNGIPYVSSGILANNNCIIVGSLTTGPEIMMLTRAFLN.

This sequence belongs to the eIF-6 family.

In terms of biological role, binds to the 50S ribosomal subunit and prevents its association with the 30S ribosomal subunit to form the 70S initiation complex. This is Translation initiation factor 6 from Nitrosopumilus maritimus (strain SCM1).